A 112-amino-acid chain; its full sequence is Small ribosomal subunit protein uS11c (112 aa).

It belongs to the universal ribosomal protein uS11 family. In terms of assembly, part of the 30S ribosomal subunit.

It is found in the plastid. In Euglena longa (Euglenophycean alga), this protein is Small ribosomal subunit protein uS11c.